Here is a 251-residue protein sequence, read N- to C-terminus: Bidirectional sugar transporter SWEET4 (251 aa).

The Extracellular portion of the chain corresponds to 1-12 (MVNATVARNIAG). A glycan (N-linked (GlcNAc...) asparagine) is linked at Asn3. Residues 12–96 (GICGNVISLF…LAIFFFFSPT (85 aa)) form the MtN3/slv 1 domain. A helical membrane pass occupies residues 13 to 33 (ICGNVISLFLFLSPIPTFITI). Topologically, residues 34-45 (YKKKKVEEYKAD) are cytoplasmic. A helical transmembrane segment spans residues 46–66 (PYLATVLNCALWVFYGLPMVQ). Residues 67–72 (PDSLLV) lie on the Extracellular side of the membrane. Residues 73 to 93 (ITINGTGLAIELVYLAIFFFF) traverse the membrane as a helical segment. Topologically, residues 94 to 103 (SPTSRKVKVG) are cytoplasmic. Residues 104–124 (LWLIGEMVFVGIVATCTLLLF) form a helical membrane-spanning segment. Residues 125–132 (HTHNQRSS) are Extracellular-facing. A helical membrane pass occupies residues 133-153 (FVGIFCVIFVSLMYIAPLTIM). The 84-residue stretch at 133-216 (FVGIFCVIFV…LILYACYYKT (84 aa)) folds into the MtN3/slv 2 domain. Residues 154–163 (SKVIKTKSVK) are Cytoplasmic-facing. The chain crosses the membrane as a helical span at residues 164–186 (YMPFSLSLANFLNGVVWVIYALI). The Extracellular portion of the chain corresponds to 187–190 (KFDL). Residues 191-213 (FILIGNGLGTVSGAVQLILYACY) form a helical membrane-spanning segment. Topologically, residues 214-251 (YKTTPKDDEDEEDEENLSKVNSQLQLSGNSGQAKRVSA) are cytoplasmic. Positions 220–251 (DDEDEEDEENLSKVNSQLQLSGNSGQAKRVSA) are disordered. Polar residues predominate over residues 231–245 (SKVNSQLQLSGNSGQ).

This sequence belongs to the SWEET sugar transporter family. Forms homooligomers and heterooligomers with SWEET8 and SWEET17.

Its subcellular location is the cell membrane. Mediates both low-affinity uptake and efflux of sugar across the plasma membrane. This Arabidopsis thaliana (Mouse-ear cress) protein is Bidirectional sugar transporter SWEET4.